Here is a 219-residue protein sequence, read N- to C-terminus: Proline-rich protein 27 (219 aa).

The first 15 residues, 1–15, serve as a signal peptide directing secretion; it reads MKLLLWACIVCVAFA. Residues 155 to 204 show a composition bias toward low complexity; that stretch reads AAEPAAEAPVGAEPAAEAPVAAEPAAEAPVGVEPAAEEPSPAEPATAKPA. The segment at 155 to 219 is disordered; it reads AAEPAAEAPV…PSPSLEQANQ (65 aa).

It is found in the secreted. This Homo sapiens (Human) protein is Proline-rich protein 27 (PRR27).